The following is a 134-amino-acid chain: MSWQAYVDDHLMCDLEGNPGHHLAAAAILGQDGSVWAQSTAFPQFKPDEINGILTDFNEPGHLAPTGLHLGGAKYMVIQGEPGAVIRGKKGSGGITIKKTGQALVFGIYEEPVTPGQCNMVVERLGDYLLEQGL.

Cys-13 and Cys-118 are disulfide-bonded. Positions 84-100 (AVIRGKKGSGGITIKKT) match the Involved in PIP2 interaction motif. The residue at position 114 (Thr-114) is a Phosphothreonine.

It belongs to the profilin family. In terms of assembly, occurs in many kinds of cells as a complex with monomeric actin in a 1:1 ratio. In terms of processing, phosphorylated by MAP kinases.

It localises to the cytoplasm. The protein resides in the cytoskeleton. Binds to actin and affects the structure of the cytoskeleton. At high concentrations, profilin prevents the polymerization of actin, whereas it enhances it at low concentrations. In Olea europaea (Common olive), this protein is Profilin-2.